Consider the following 1174-residue polypeptide: Pesticidal crystal protein Cry1Fa (1174 aa).

Belongs to the delta endotoxin family.

Promotes colloidosmotic lysis by binding to the midgut epithelial cells of many lepidopteran larvae. This is Pesticidal crystal protein Cry1Fa (cry1Fa) from Bacillus thuringiensis subsp. aizawai.